The following is a 403-amino-acid chain: Accessory Sec system protein translocase subunit SecY2 (403 aa).

Helical transmembrane passes span 17 to 37, 63 to 83, 105 to 125, 131 to 151, 157 to 177, 186 to 206, 240 to 260, 276 to 296, 339 to 359, and 366 to 386; these read MLYTCFILFIYILGTNISIVS, LNIFTLGLGPWLTSMIILMLI, ILTLILSVIQSYFVIHEYVSK, DNIYLTILILVTGTMLLVWLA, YGIAGPMPIVMVSIIKSMMHQ, HIVIALLIILVIITLFILLFI, ITLMMSISAFVFLKSGIHFIL, FDSPVGISVYLVIQMLLGYFL, WFGLALVTVIIGIPLYFTLFV, and IYFSVQLIVLVYISINIAETI.

This sequence belongs to the SecY/SEC61-alpha family. SecY2 subfamily. May form heterotrimers with SecE and SecG subunits (Potential). Component of the accessory SecA2/SecY2 protein translocase complex required to export cell wall protein SrpA.

The protein resides in the cell membrane. In terms of biological role, the central subunit of a protein translocation channel (Potential). Part of the accessory SecA2/SecY2 system specifically required to export SraP, a serine-rich repeat cell wall protein encoded upstream in the same operon. This Staphylococcus aureus (strain NCTC 8325 / PS 47) protein is Accessory Sec system protein translocase subunit SecY2.